We begin with the raw amino-acid sequence, 390 residues long: F-box/kelch-repeat protein At3g04660 (390 aa).

Residues 18–67 (YDPSSILPLELKIEILMKSPPKSIAKLGFVSNHWSSIIRGQVFTDLYMRR) enclose the F-box domain. Kelch repeat units lie at residues 115-161 (FSPP…FGYD) and 272-323 (MVDH…DQRV).

Part of a SCF (ASK-cullin-F-box) protein ligase complex. Interacts with SKP1A/ASK1, SKP1B/ASK2, ASK11 and ASK13.

The protein resides in the nucleus. The protein operates within protein modification; protein ubiquitination. Its function is as follows. Component of SCF(ASK-cullin-F-box) E3 ubiquitin ligase complexes, which may mediate the ubiquitination and subsequent proteasomal degradation of target proteins. The protein is F-box/kelch-repeat protein At3g04660 of Arabidopsis thaliana (Mouse-ear cress).